Here is a 79-residue protein sequence, read N- to C-terminus: DNA-directed RNA polymerase subunit omega (79 aa).

It belongs to the RNA polymerase subunit omega family. In terms of assembly, the RNAP catalytic core consists of 2 alpha, 1 beta, 1 beta' and 1 omega subunit. When a sigma factor is associated with the core the holoenzyme is formed, which can initiate transcription.

It catalyses the reaction RNA(n) + a ribonucleoside 5'-triphosphate = RNA(n+1) + diphosphate. In terms of biological role, promotes RNA polymerase assembly. Latches the N- and C-terminal regions of the beta' subunit thereby facilitating its interaction with the beta and alpha subunits. This chain is DNA-directed RNA polymerase subunit omega, found in Bdellovibrio bacteriovorus (strain ATCC 15356 / DSM 50701 / NCIMB 9529 / HD100).